Reading from the N-terminus, the 523-residue chain is WD repeat-containing protein WDS homolog (523 aa).

In terms of domain architecture, LisH spans 16–48; sequence KKHEFIRILVQCLYSLGFKNSASCLEFESKILY. The 59-residue stretch at 49–107 folds into the CTLH domain; that stretch reads KTADSEFLEKQVLSGNWDSCVQVLDRIFDNSMDDTRNTALYLVFKQCLLEYLKRGDVSL. 7 WD repeats span residues 222 to 261, 267 to 306, 310 to 353, 355 to 394, 395 to 434, 438 to 480, and 483 to 523; these read AHKNEVWFVQFSNSGKYLATASSDCTAIIWKVLDDNKVEL, SHQNPVSFVSWSPDDTKLLTCGNAEVLKLWDVDTGVLRHT, NNTG…KAWR, TRIPKVVDLAVTPDGESMITVFSDKEIRILNLETKVERVI, SEEQPITSLSISGDGKFFIVNLSCQEIHLWDLAGEWKQPL, GHRQ…PLEV, and GHSM…KPLN.

In terms of assembly, interacts with RANBPM.

It is found in the cytoplasm. The protein is WD repeat-containing protein WDS homolog of Arabidopsis thaliana (Mouse-ear cress).